We begin with the raw amino-acid sequence, 689 residues long: MTTQDFLLEIGCEELPPRRLNQLSQALSQTIKSELEKADLSFENIHRYATPRRLAVLVNNLALQQPQRKIERQGPSVKAAFDKDQTPTLACFGFAQSCGVSTAQLKVKKTKKGEFIYCEIEQPGQNTLDLLPNIIQSALKQLPTPKAMRWGDHKEFFVRPVHWIILMLGKDLVPATLLGKMASCETRGHRFHHPKNILVTKPDDYQKLLLTHGMVIADFEKRREKIRDLIQKAASEKGEAIIDEGLLEEVTGMVEWPVILVGNFKAEFLKLPPEVLITTMKVHQRTFPIKNKNGDLLPYFIIVSNIESKNPKRVIVGNERVINARLADASFFYDNDLRTSLENRLPKLGDVIFQRQLGTLADKARRIEKLAAFIAKQINIDEQLAARAGLLSKCDLVSEMVYEFPTLQGIMGYYYAFHDKEPPLVAEAIKEHYLPRFSGDQLPRNLLSPCVAVADRIDTIIGIIGINKSPTGDKDPFALRRAALGILRILIEKELSLDLFALLNEAKNNYAVELPNVNVVNQSFDFIIERLRAWYLEKEVPASVFMAVLASHPDDPLDFDRRIKAVQHFQTLPEADALAAANKRVSNILKKQAAELKSKTIDHSLFDSDAEHLLADQLKERAELVNNLYKKADYTKALSELASLKEPIDIFFDKVMVMVDDKEKRENRLALLSSLQQLFSQIADISLLS.

The protein belongs to the class-II aminoacyl-tRNA synthetase family. Tetramer of two alpha and two beta subunits.

Its subcellular location is the cytoplasm. The enzyme catalyses tRNA(Gly) + glycine + ATP = glycyl-tRNA(Gly) + AMP + diphosphate. This chain is Glycine--tRNA ligase beta subunit (glyS), found in Coxiella burnetii (strain RSA 493 / Nine Mile phase I).